Reading from the N-terminus, the 271-residue chain is DNA repair protein RecO (271 aa).

This sequence belongs to the RecO family.

In terms of biological role, involved in DNA repair and RecF pathway recombination. The chain is DNA repair protein RecO from Rhodococcus erythropolis (strain PR4 / NBRC 100887).